The primary structure comprises 127 residues: MEGQRCIALIAHDEKKDDMADFARHHQKVLASFRIVATGTTGGRVQEACPGLEVIRLKSGPLGGDQQIGAMIATGEVDMLIFFTDPLTAMPHDVDVKALTRLATVYDIPMALNRATAENLIDFNSAD.

Residues 1 to 127 (MEGQRCIALI…ENLIDFNSAD (127 aa)) enclose the MGS-like domain. Residues histidine 12, lysine 16, 38–41 (TGTT), and 59–60 (SG) each bind substrate. Aspartate 65 serves as the catalytic Proton donor/acceptor. Residue histidine 92 participates in substrate binding.

This sequence belongs to the methylglyoxal synthase family.

The catalysed reaction is dihydroxyacetone phosphate = methylglyoxal + phosphate. In terms of biological role, catalyzes the formation of methylglyoxal from dihydroxyacetone phosphate. This Agrobacterium fabrum (strain C58 / ATCC 33970) (Agrobacterium tumefaciens (strain C58)) protein is Methylglyoxal synthase.